The following is a 391-amino-acid chain: Thioredoxin-interacting protein (391 aa).

A Glycyl lysine isopeptide (Lys-Gly) (interchain with G-Cter in ubiquitin) cross-link involves residue lysine 212. Residue serine 361 is modified to Phosphoserine.

It belongs to the arrestin family. Homodimer; disulfide-linked. Interacts with TXN/thioredoxin through its redox-active site. Interacts with transcriptional repressors ZBTB16, ZBTB32 and HDAC1. Interacts with DDIT4. Post-translationally, ubiquitinated; undergoes heterotypic 'Lys-48'-/'Lys-63'-branched polyubiquitination catalyzed by ITCH and UBR5 resulting in proteasomal degradation. Deubiquitinated by USP5, leading to TXNIP stabilization.

It localises to the cytoplasm. Functionally, may act as an oxidative stress mediator by inhibiting thioredoxin activity or by limiting its bioavailability. Interacts with COPS5 and restores COPS5-induced suppression of CDKN1B stability, blocking the COPS5-mediated translocation of CDKN1B from the nucleus to the cytoplasm. Functions as a transcriptional repressor, possibly by acting as a bridge molecule between transcription factors and corepressor complexes, and over-expression will induce G0/G1 cell cycle arrest. Required for the maturation of natural killer cells. Acts as a suppressor of tumor cell growth. Inhibits the proteasomal degradation of DDIT4, and thereby contributes to the inhibition of the mammalian target of rapamycin complex 1 (mTORC1). This is Thioredoxin-interacting protein (TXNIP) from Sus scrofa (Pig).